The chain runs to 64 residues: MTTEITTVKCPTCKQAVIWDAASIYRPFCSKRCQLIDLGEWADEEKCIPSDDMVSDSEDWSETR.

Residues Cys10, Cys13, Cys29, and Cys33 each coordinate Zn(2+).

The protein belongs to the DNA gyrase inhibitor YacG family. Interacts with GyrB. Zn(2+) serves as cofactor.

Functionally, inhibits all the catalytic activities of DNA gyrase by preventing its interaction with DNA. Acts by binding directly to the C-terminal domain of GyrB, which probably disrupts DNA binding by the gyrase. This chain is DNA gyrase inhibitor YacG, found in Pectobacterium atrosepticum (strain SCRI 1043 / ATCC BAA-672) (Erwinia carotovora subsp. atroseptica).